Consider the following 349-residue polypeptide: MERGNEKIKLTELVKLHGUACKLPSTELEFLVKGIVTDDDLLDKNILVGLGDDASIIKRNGLVIAKTVDVFTPIVDDPYIQGKIAACNSTSDIYAMGLLDIVGVLAIVGIPEKLPIHVVREMLKGFQDFCRENKTTIVGGHTILNPWPLIGGAVTGVGREEEVLTKAGVKVGDVLILTKPLGTQTAMALSRIPEEFKDLISITEEERDYIINKAIEIMTTSNRYALKALRKAEERVGDKIANALTDITGFGILGHSNEMAKNSNVLIEINLLPCIKRTPELSRLFGHALLDGYGAETAGGLLISAKEEYKDNLIDELEKAKCYAFEVGRVVKKGEGKAVLSKDVKVIEI.

U19 is a catalytic residue. Residue U19 is a non-standard amino acid, selenocysteine. Residues K22 and L50–D52 contribute to the ATP site. D53 contributes to the Mg(2+) binding site. ATP-binding positions include D69, D92, and G140 to T142. D92 contributes to the Mg(2+) binding site. Residue D246 coordinates Mg(2+).

Belongs to the selenophosphate synthase 1 family. Class I subfamily. As to quaternary structure, homodimer. Mg(2+) serves as cofactor.

It carries out the reaction hydrogenselenide + ATP + H2O = selenophosphate + AMP + phosphate + 2 H(+). In terms of biological role, synthesizes selenophosphate from selenide and ATP. This chain is Selenide, water dikinase, found in Methanocaldococcus jannaschii (strain ATCC 43067 / DSM 2661 / JAL-1 / JCM 10045 / NBRC 100440) (Methanococcus jannaschii).